The following is a 32-amino-acid chain: ilv operon leader peptide (32 aa).

This chain is ilv operon leader peptide (ilvL), found in Escherichia coli O157:H7.